The sequence spans 68 residues: MNKEQSADDPSVDLIRVKNMLNSTISMSYPDVVIACIEHKVSLEAFRAIEAALVKHDNNMKDYSLVVD.

The N-terminal stretch at 1–28 (MNKEQSADDPSVDLIRVKNMLNSTISMS) is a signal peptide.

This is an uncharacterized protein from Escherichia coli (strain K12).